The chain runs to 338 residues: Cytoskeleton protein RodZ (338 aa).

Residues 1 to 111 (MNTEATHDQN…LGKRRKKRDG (111 aa)) lie on the Cytoplasmic side of the membrane. The region spanning 19–71 (LRNAREQLGLSQQAVAERLCLKVSTVRDIEEDKAPADLASTFLRGYIRSYARL) is the HTH cro/C1-type domain. The segment at residues 30 to 49 (QQAVAERLCLKVSTVRDIEE) is a DNA-binding region (H-T-H motif). A helical; Signal-anchor for type II membrane protein transmembrane segment spans residues 112-132 (WLMTFTWLVLFVVIGLSGAWW). The Periplasmic segment spans residues 133 to 338 (WQDHKAQQEE…TLNAEQSPAQ (206 aa)). Polar residues predominate over residues 155–169 (NANGTNSQSIPLENS). The tract at residues 155–240 (NANGTNSQSI…TTPDTATPLP (86 aa)) is disordered. The segment covering 170–188 (TTTVPEATPAPAAPVDTTA) has biased composition (low complexity). A compositionally biased stretch (polar residues) spans 203–217 (EPQQNAVVPPSQANV). A compositionally biased stretch (low complexity) spans 218–240 (DTATTAPAAPATTTTPDTATPLP).

This sequence belongs to the RodZ family.

It is found in the cell inner membrane. Its function is as follows. Cytoskeletal protein that is involved in cell-shape control through regulation of the length of the long axis. The protein is Cytoskeleton protein RodZ of Escherichia fergusonii (strain ATCC 35469 / DSM 13698 / CCUG 18766 / IAM 14443 / JCM 21226 / LMG 7866 / NBRC 102419 / NCTC 12128 / CDC 0568-73).